Here is a 975-residue protein sequence, read N- to C-terminus: Glycine dehydrogenase (decarboxylating) (975 aa).

Residue K723 is modified to N6-(pyridoxal phosphate)lysine.

Belongs to the GcvP family. In terms of assembly, the glycine cleavage system is composed of four proteins: P, T, L and H. It depends on pyridoxal 5'-phosphate as a cofactor.

It carries out the reaction N(6)-[(R)-lipoyl]-L-lysyl-[glycine-cleavage complex H protein] + glycine + H(+) = N(6)-[(R)-S(8)-aminomethyldihydrolipoyl]-L-lysyl-[glycine-cleavage complex H protein] + CO2. Functionally, the glycine cleavage system catalyzes the degradation of glycine. The P protein binds the alpha-amino group of glycine through its pyridoxal phosphate cofactor; CO(2) is released and the remaining methylamine moiety is then transferred to the lipoamide cofactor of the H protein. This is Glycine dehydrogenase (decarboxylating) from Burkholderia mallei (strain NCTC 10247).